A 437-amino-acid polypeptide reads, in one-letter code: Epsilon-sarcoglycan (437 aa).

Over 1–317 the chain is Extracellular; it reads MQLPWWWELG…LKSRDYYTDF (317 aa). N-linked (GlcNAc...) asparagine glycosylation occurs at asparagine 200. A helical membrane pass occupies residues 318 to 338; sequence LVTLAVPSAVALVLFLILAYI. Residues 339 to 437 are Cytoplasmic-facing; that stretch reads MCCRREGVEK…QQQTTGKWYS (99 aa). Positions 418–437 are disordered; that stretch reads QNLPHQTQIPQQQTTGKWYS.

It belongs to the sarcoglycan alpha/epsilon family. In terms of processing, N-glycosylated. Post-translationally, ubiquitinated, leading to its degradation by the proteasome.

It localises to the cell membrane. The protein localises to the sarcolemma. Its subcellular location is the cytoplasm. The protein resides in the cytoskeleton. It is found in the cell projection. It localises to the dendrite. The protein localises to the golgi apparatus. Component of the sarcoglycan complex, a subcomplex of the dystrophin-glycoprotein complex which forms a link between the F-actin cytoskeleton and the extracellular matrix. This chain is Epsilon-sarcoglycan (SGCE), found in Bos taurus (Bovine).